Here is a 466-residue protein sequence, read N- to C-terminus: tRNA modification GTPase MnmE (466 aa).

The (6S)-5-formyl-5,6,7,8-tetrahydrofolate site is built by arginine 23, glutamate 86, and lysine 125. The region spanning 221–388 (GIPVAIVGEP…LKNELLSFVN (168 aa)) is the TrmE-type G domain. Asparagine 231 contacts K(+). GTP is bound by residues 231–236 (NVGKST), 250–256 (SDIAGTT), and 275–278 (DTAG). Mg(2+) is bound at residue serine 235. 3 residues coordinate K(+): serine 250, isoleucine 252, and threonine 255. Threonine 256 contributes to the Mg(2+) binding site. A (6S)-5-formyl-5,6,7,8-tetrahydrofolate-binding site is contributed by lysine 466.

Belongs to the TRAFAC class TrmE-Era-EngA-EngB-Septin-like GTPase superfamily. TrmE GTPase family. In terms of assembly, homodimer. Heterotetramer of two MnmE and two MnmG subunits. It depends on K(+) as a cofactor.

The protein resides in the cytoplasm. In terms of biological role, exhibits a very high intrinsic GTPase hydrolysis rate. Involved in the addition of a carboxymethylaminomethyl (cmnm) group at the wobble position (U34) of certain tRNAs, forming tRNA-cmnm(5)s(2)U34. The chain is tRNA modification GTPase MnmE from Flavobacterium johnsoniae (strain ATCC 17061 / DSM 2064 / JCM 8514 / BCRC 14874 / CCUG 350202 / NBRC 14942 / NCIMB 11054 / UW101) (Cytophaga johnsonae).